Reading from the N-terminus, the 34-residue chain is COP9 signalosome complex subunit 5a (34 aa).

This sequence belongs to the peptidase M67A family. CSN5 subfamily. Component of the CSN complex, probably composed of CSN1, CSN2, CSN3, CSN4, CSN5 (CSN5A or CSN5B), CSN6 (CSN6A or CSN6B), CSN7 and CSN8. Requires a divalent metal cation as cofactor.

It is found in the cytoplasm. It localises to the nucleus. Functionally, probable protease subunit of the COP9 signalosome complex (CSN), a complex involved in various cellular and developmental processes such as photomorphogenesis and auxin and jasmonate responses. The CSN complex is an essential regulator of the ubiquitin (Ubl) conjugation pathway by mediating the deneddylation of the cullin subunits of the SCF-type E3 ligase complexes, leading to decrease the Ubl ligase activity of SCF. In the complex, it probably acts as the catalytic center that mediates the cleavage of Nedd8 from cullins. It however has no metalloprotease activity by itself and requires the other subunits of the CSN complex. The CSN complex is involved in repression of photomorphogenesis in darkness by regulating the activity of COP1-containing Ubl ligase complexes. The sequence is that of COP9 signalosome complex subunit 5a (CSN5A) from Brassica oleracea (Wild cabbage).